The primary structure comprises 108 residues: PTS system galactose-specific EIIB component (108 aa).

In terms of domain architecture, PTS EIIB type-3 spans 3 to 108 (DKVIALACAA…VLAAAENLMN (106 aa)). The Phosphocysteine intermediate role is filled by Cys10. At Cys10 the chain carries Phosphocysteine; by EIIA.

The catalysed reaction is N(pros)-phospho-L-histidyl-[protein] + D-galactose(out) = D-galactose 6-phosphate(in) + L-histidyl-[protein]. The phosphoenolpyruvate-dependent sugar phosphotransferase system (sugar PTS), a major carbohydrate active transport system, catalyzes the phosphorylation of incoming sugar substrates concomitantly with their translocation across the cell membrane. Involved in galactose transport with PtcA and Lmg_0963. The polypeptide is PTS system galactose-specific EIIB component (Lactococcus lactis subsp. cremoris (strain MG1363)).